The primary structure comprises 112 residues: uncharacterized protein (112 aa).

The transit peptide at 1-21 (MYLSAQLMRTVTASHLTLRAL) directs the protein to the mitochondrion.

The protein localises to the mitochondrion. This is an uncharacterized protein from Saccharomyces cerevisiae (strain ATCC 204508 / S288c) (Baker's yeast).